Reading from the N-terminus, the 381-residue chain is Flap endonuclease 1 (381 aa).

The N-domain stretch occupies residues 1 to 105 (MGIKGLNSII…HELDKRTSRR (105 aa)). D34 serves as a coordination point for Mg(2+). Residues R47 and R71 each contribute to the DNA site. Mg(2+)-binding residues include D87, E156, E158, D177, and D179. The tract at residues 120–251 (EKMKHERRLV…VTALKLMKEH (132 aa)) is I-domain. Position 156 (E156) interacts with DNA. Residues G229 and D231 each coordinate DNA. D231 is a binding site for Mg(2+). The tract at residues 338–346 (VQGRLDGFF) is interaction with PCNA.

This sequence belongs to the XPG/RAD2 endonuclease family. FEN1 subfamily. Interacts with PCNA. Three molecules of FEN1 bind to one PCNA trimer with each molecule binding to one PCNA monomer. PCNA stimulates the nuclease activity without altering cleavage specificity. Requires Mg(2+) as cofactor. In terms of processing, phosphorylated. Phosphorylation upon DNA damage induces relocalization to the nuclear plasma.

It localises to the nucleus. Its subcellular location is the nucleolus. The protein localises to the nucleoplasm. It is found in the mitochondrion. Functionally, structure-specific nuclease with 5'-flap endonuclease and 5'-3' exonuclease activities involved in DNA replication and repair. During DNA replication, cleaves the 5'-overhanging flap structure that is generated by displacement synthesis when DNA polymerase encounters the 5'-end of a downstream Okazaki fragment. It enters the flap from the 5'-end and then tracks to cleave the flap base, leaving a nick for ligation. Also involved in the long patch base excision repair (LP-BER) pathway, by cleaving within the apurinic/apyrimidinic (AP) site-terminated flap. Acts as a genome stabilization factor that prevents flaps from equilibrating into structures that lead to duplications and deletions. Also possesses 5'-3' exonuclease activity on nicked or gapped double-stranded DNA, and exhibits RNase H activity. Also involved in replication and repair of rDNA and in repairing mitochondrial DNA. In Candida glabrata (strain ATCC 2001 / BCRC 20586 / JCM 3761 / NBRC 0622 / NRRL Y-65 / CBS 138) (Yeast), this protein is Flap endonuclease 1.